A 440-amino-acid chain; its full sequence is UDP-glucose 6-dehydrogenase YwqF (440 aa).

NAD(+) is bound by residues 2-19 (NITV…GVSL), V11, D30, K35, T121, and E155. Substrate contacts are provided by residues 151–155 (EFLRE), K204, N208, 249–253 (FLKAG), and G257. C260 (nucleophile) is an active-site residue. K263 serves as a coordination point for NAD(+). K320 contacts substrate. An NAD(+)-binding site is contributed by R327.

The protein belongs to the UDP-glucose/GDP-mannose dehydrogenase family. Phosphorylated on tyrosine residue(s). Phosphorylated by YwqD and dephosphorylated by YwqE in vitro.

Its subcellular location is the cytoplasm. It carries out the reaction UDP-alpha-D-glucose + 2 NAD(+) + H2O = UDP-alpha-D-glucuronate + 2 NADH + 3 H(+). The protein operates within nucleotide-sugar biosynthesis; UDP-alpha-D-glucuronate biosynthesis; UDP-alpha-D-glucuronate from UDP-alpha-D-glucose: step 1/1. With respect to regulation, competitively inhibited by UDP-glucose. Activated by phosphorylation, which may increase affinity for NAD(+); inhibited by dephosphorylation. In terms of biological role, catalyzes the conversion of UDP-glucose into UDP-glucuronate, one of the precursors of teichuronic acid. The polypeptide is UDP-glucose 6-dehydrogenase YwqF (ywqF) (Bacillus subtilis (strain 168)).